The chain runs to 428 residues: Elongation factor 1-alpha (428 aa).

A tr-type G domain is found at 5–217; that stretch reads KPHVNIVFIG…DQIPEPEKPV (213 aa). The segment at 14–21 is G1; the sequence is GHVDHGKS. 14–21 is a binding site for GTP; the sequence is GHVDHGKS. Ser21 lines the Mg(2+) pocket. A G2 region spans residues 68 to 72; sequence GITID. The G3 stretch occupies residues 89 to 92; that stretch reads DAPG. GTP is bound by residues 89–93 and 144–147; these read DAPGH and NKMD. The G4 stretch occupies residues 144–147; the sequence is NKMD. The interval 181-183 is G5; it reads SAW.

The protein belongs to the TRAFAC class translation factor GTPase superfamily. Classic translation factor GTPase family. EF-Tu/EF-1A subfamily.

It is found in the cytoplasm. It catalyses the reaction GTP + H2O = GDP + phosphate + H(+). In terms of biological role, GTP hydrolase that promotes the GTP-dependent binding of aminoacyl-tRNA to the A-site of ribosomes during protein biosynthesis. The polypeptide is Elongation factor 1-alpha (Pyrococcus furiosus (strain ATCC 43587 / DSM 3638 / JCM 8422 / Vc1)).